Here is a 513-residue protein sequence, read N- to C-terminus: ATP synthase subunit alpha (513 aa).

An ATP-binding site is contributed by 169 to 176 (GDRQTGKT).

Belongs to the ATPase alpha/beta chains family. F-type ATPases have 2 components, CF(1) - the catalytic core - and CF(0) - the membrane proton channel. CF(1) has five subunits: alpha(3), beta(3), gamma(1), delta(1), epsilon(1). CF(0) has three main subunits: a(1), b(2) and c(9-12). The alpha and beta chains form an alternating ring which encloses part of the gamma chain. CF(1) is attached to CF(0) by a central stalk formed by the gamma and epsilon chains, while a peripheral stalk is formed by the delta and b chains.

The protein resides in the cell inner membrane. It catalyses the reaction ATP + H2O + 4 H(+)(in) = ADP + phosphate + 5 H(+)(out). In terms of biological role, produces ATP from ADP in the presence of a proton gradient across the membrane. The alpha chain is a regulatory subunit. The protein is ATP synthase subunit alpha of Salmonella paratyphi C (strain RKS4594).